The sequence spans 96 residues: Co-chaperonin GroES (96 aa).

This sequence belongs to the GroES chaperonin family. Heptamer of 7 subunits arranged in a ring. Interacts with the chaperonin GroEL.

It localises to the cytoplasm. Its function is as follows. Together with the chaperonin GroEL, plays an essential role in assisting protein folding. The GroEL-GroES system forms a nano-cage that allows encapsulation of the non-native substrate proteins and provides a physical environment optimized to promote and accelerate protein folding. GroES binds to the apical surface of the GroEL ring, thereby capping the opening of the GroEL channel. This Nitrosococcus oceani (strain ATCC 19707 / BCRC 17464 / JCM 30415 / NCIMB 11848 / C-107) protein is Co-chaperonin GroES.